Consider the following 637-residue polypeptide: Phosphomethylpyrimidine synthase (637 aa).

Substrate contacts are provided by residues Asn242, Met271, Tyr300, His336, 356–358 (SRG), 397–400 (DGLR), and Glu436. Residue His440 coordinates Zn(2+). Tyr463 contacts substrate. His504 is a binding site for Zn(2+). Cys584, Cys587, and Cys592 together coordinate [4Fe-4S] cluster.

This sequence belongs to the ThiC family. As to quaternary structure, homodimer. [4Fe-4S] cluster is required as a cofactor.

The catalysed reaction is 5-amino-1-(5-phospho-beta-D-ribosyl)imidazole + S-adenosyl-L-methionine = 4-amino-2-methyl-5-(phosphooxymethyl)pyrimidine + CO + 5'-deoxyadenosine + formate + L-methionine + 3 H(+). Its pathway is cofactor biosynthesis; thiamine diphosphate biosynthesis. Its function is as follows. Catalyzes the synthesis of the hydroxymethylpyrimidine phosphate (HMP-P) moiety of thiamine from aminoimidazole ribotide (AIR) in a radical S-adenosyl-L-methionine (SAM)-dependent reaction. This chain is Phosphomethylpyrimidine synthase, found in Bordetella bronchiseptica (strain ATCC BAA-588 / NCTC 13252 / RB50) (Alcaligenes bronchisepticus).